The sequence spans 225 residues: Adenosylcobinamide-GDP ribazoletransferase (225 aa).

A run of 5 helical transmembrane segments spans residues 34–54 (FVGI…FWFL), 93–113 (NLGT…FYSF), 116–136 (VSAF…LLLL), 165–185 (PLLL…AITI), and 204–224 (VVGA…YFLA).

It belongs to the CobS family. The cofactor is Mg(2+).

The protein localises to the cell membrane. The enzyme catalyses alpha-ribazole + adenosylcob(III)inamide-GDP = adenosylcob(III)alamin + GMP + H(+). It carries out the reaction alpha-ribazole 5'-phosphate + adenosylcob(III)inamide-GDP = adenosylcob(III)alamin 5'-phosphate + GMP + H(+). It functions in the pathway cofactor biosynthesis; adenosylcobalamin biosynthesis; adenosylcobalamin from cob(II)yrinate a,c-diamide: step 7/7. In terms of biological role, joins adenosylcobinamide-GDP and alpha-ribazole to generate adenosylcobalamin (Ado-cobalamin). Also synthesizes adenosylcobalamin 5'-phosphate from adenosylcobinamide-GDP and alpha-ribazole 5'-phosphate. The protein is Adenosylcobinamide-GDP ribazoletransferase (cobS1) of Archaeoglobus fulgidus (strain ATCC 49558 / DSM 4304 / JCM 9628 / NBRC 100126 / VC-16).